The sequence spans 179 residues: Large ribosomal subunit protein uL10 (179 aa).

The binds L7/L12 dimers stretch occupies residues Lys137–Glu179.

As to quaternary structure, part of the ribosomal stalk of the 50S ribosomal subunit. The N-terminus interacts with L11 and 23S rRNA to form the base of the stalk. The C-terminus forms an elongated spine to which 3 L12 dimers bind in a sequential fashion forming a heptameric L10(L12)2(L12)2(L12)2 complex.

Forms part of the ribosomal stalk, playing a central role in the interaction of the ribosome with GTP-bound translation factors (such as IF-2, EF-Tu, EF-G and RF3). The protein is Large ribosomal subunit protein uL10 (rplJ) of Thermotoga maritima (strain ATCC 43589 / DSM 3109 / JCM 10099 / NBRC 100826 / MSB8).